We begin with the raw amino-acid sequence, 545 residues long: Serine/threonine-protein kinase PAK 1 (545 aa).

The disordered stretch occupies residues methionine 1 to leucine 77. Serine 2 is subject to N-acetylserine. Serine 21 is modified (phosphoserine; by PKB and autocatalysis). A Phosphoserine; by autocatalysis modification is found at serine 57. A compositionally biased stretch (basic and acidic residues) spans lysine 68–leucine 77. The autoregulatory region stretch occupies residues lysine 70 to glutamine 140. In terms of domain architecture, CRIB spans isoleucine 75–glycine 88. The segment at isoleucine 75–arginine 105 is GTPase-binding. The residue at position 84 (threonine 84) is a Phosphothreonine; by OXSR1. Phosphoserine is present on serine 115. Phosphotyrosine occurs at positions 131 and 142. Residue serine 144 is modified to Phosphoserine; by autocatalysis. Residue serine 149 is modified to Phosphoserine. Residue tyrosine 153 is modified to Phosphotyrosine; by JAK2. The segment at leucine 159–lysine 198 is disordered. Residue serine 174 is modified to Phosphoserine. Positions serine 174–alanine 184 are enriched in acidic residues. At threonine 185 the chain carries Phosphothreonine. Position 199 is a phosphoserine; by autocatalysis (serine 199). Phosphotyrosine; by JAK2 is present on tyrosine 201. Serine 204 carries the phosphoserine modification. Residues valine 211–glutamate 251 form a disordered region. 2 positions are modified to phosphothreonine: threonine 212 and threonine 219. Serine 220 and serine 223 each carry phosphoserine. Positions serine 220–proline 231 are enriched in polar residues. A phosphothreonine mark is found at threonine 225, threonine 229, and threonine 230. The region spanning tyrosine 270–leucine 521 is the Protein kinase domain. Isoleucine 276–valine 284 lines the ATP pocket. Tyrosine 285 is modified (phosphotyrosine; by JAK2). Residues lysine 299 and glutamate 345 to leucine 347 contribute to the ATP site. Residue aspartate 389 is the Proton acceptor of the active site. The residue at position 423 (threonine 423) is a Phosphothreonine; by autocatalysis, BRSK2 and PDPK1.

It belongs to the protein kinase superfamily. STE Ser/Thr protein kinase family. STE20 subfamily. As to quaternary structure, homodimer; homodimerization results in autoinhibition. Active as monomer. Interacts with GIT1. Component of cytoplasmic complexes, which also contains PXN, ARHGEF7 and GIT1. Interacts with NISCH. Interacts with DVL1; mediates the formation of a DVL1, MUSK and PAK1 ternary complex involved in AChR clustering. Binds to the caspase-cleaved p110 isoform of CDC2L1 and CDC2L2, p110C, but not the full-length proteins. Interacts with ARHGEF7. Interacts tightly with GTP-bound but not GDP-bound CDC42/P21 and RAC1. Interacts with SCRIB. Interacts with PDPK1. Interacts (via kinase domain) with RAF1. Interacts with NCK1 and NCK2. Interacts with TBCB. Interacts with BRSK2. Interacts with SNAI1. Interacts with CIB1 isoform 2. Interacts with CIB1 (via N-terminal region); the interaction is direct, promotes PAK1 activity and occurs in a calcium-dependent manner. Interacts with INPP5K. Interacts with gamma-tubulin. Interacts with RHOU; the interaction promotes PAK1 activation. The cofactor is Mg(2+). In terms of processing, autophosphorylated in trans, meaning that in a dimer, one kinase molecule phosphorylates the other one. Activated by autophosphorylation at Thr-423 in response to a conformation change, triggered by interaction with GTP-bound CDC42 or RAC1. Activated by phosphorylation at Thr-423 by BRSK2 and by PDPK1. Phosphorylated by JAK2 in response to PRL; this increases PAK1 kinase activity. Phosphorylated at Ser-21 by PKB/AKT; this reduces interaction with NCK1 and association with focal adhesion sites. Upon DNA damage, phosphorylated at Thr-212 and translocates to the nucleoplasm. Phosphorylated at tyrosine residues, which can be enhanced by NTN1. Overexpressed in gastric cancer cells and tissues (at protein level).

It is found in the cytoplasm. It localises to the cell junction. Its subcellular location is the focal adhesion. The protein resides in the cell projection. The protein localises to the lamellipodium. It is found in the cell membrane. It localises to the ruffle membrane. Its subcellular location is the invadopodium. The protein resides in the nucleus. The protein localises to the nucleoplasm. It is found in the chromosome. It localises to the cytoskeleton. Its subcellular location is the microtubule organizing center. The protein resides in the centrosome. The enzyme catalyses L-seryl-[protein] + ATP = O-phospho-L-seryl-[protein] + ADP + H(+). The catalysed reaction is L-threonyl-[protein] + ATP = O-phospho-L-threonyl-[protein] + ADP + H(+). Its activity is regulated as follows. Activated by binding small G proteins. Binding of GTP-bound CDC42 or RAC1 to the autoregulatory region releases monomers from the autoinhibited dimer, and enables activation by phosphorylation of Thr-423. Phosphorylation of Thr-84 by OXSR1 inhibits activation. Its function is as follows. Protein kinase involved in intracellular signaling pathways downstream of integrins and receptor-type kinases that plays an important role in cytoskeleton dynamics, in cell adhesion, migration, proliferation, apoptosis, mitosis, and in vesicle-mediated transport processes. Can directly phosphorylate BAD and protects cells against apoptosis. Activated by interaction with CDC42 and RAC1. Functions as a GTPase effector that links the Rho-related GTPases CDC42 and RAC1 to the JNK MAP kinase pathway. Phosphorylates and activates MAP2K1, and thereby mediates activation of downstream MAP kinases. Involved in the reorganization of the actin cytoskeleton, actin stress fibers and of focal adhesion complexes. Phosphorylates the tubulin chaperone TBCB and thereby plays a role in the regulation of microtubule biogenesis and organization of the tubulin cytoskeleton. Plays a role in the regulation of insulin secretion in response to elevated glucose levels. Part of a ternary complex that contains PAK1, DVL1 and MUSK that is important for MUSK-dependent regulation of AChR clustering during the formation of the neuromuscular junction (NMJ). Activity is inhibited in cells undergoing apoptosis, potentially due to binding of CDC2L1 and CDC2L2. Phosphorylates MYL9/MLC2. Phosphorylates RAF1 at 'Ser-338' and 'Ser-339' resulting in: activation of RAF1, stimulation of RAF1 translocation to mitochondria, phosphorylation of BAD by RAF1, and RAF1 binding to BCL2. Phosphorylates SNAI1 at 'Ser-246' promoting its transcriptional repressor activity by increasing its accumulation in the nucleus. In podocytes, promotes NR3C2 nuclear localization. Required for atypical chemokine receptor ACKR2-induced phosphorylation of LIMK1 and cofilin (CFL1) and for the up-regulation of ACKR2 from endosomal compartment to cell membrane, increasing its efficiency in chemokine uptake and degradation. In synapses, seems to mediate the regulation of F-actin cluster formation performed by SHANK3, maybe through CFL1 phosphorylation and inactivation. Plays a role in RUFY3-mediated facilitating gastric cancer cells migration and invasion. In response to DNA damage, phosphorylates MORC2 which activates its ATPase activity and facilitates chromatin remodeling. In neurons, plays a crucial role in regulating GABA(A) receptor synaptic stability and hence GABAergic inhibitory synaptic transmission through its role in F-actin stabilization. In hippocampal neurons, necessary for the formation of dendritic spines and excitatory synapses; this function is dependent on kinase activity and may be exerted by the regulation of actomyosin contractility through the phosphorylation of myosin II regulatory light chain (MLC). Along with GIT1, positively regulates microtubule nucleation during interphase. Phosphorylates FXR1, promoting its localization to stress granules and activity. Phosphorylates ILK on 'Thr-173' and 'Ser-246', promoting nuclear export of ILK. The sequence is that of Serine/threonine-protein kinase PAK 1 from Homo sapiens (Human).